Reading from the N-terminus, the 276-residue chain is F420-dependent methylenetetrahydromethanopterin dehydrogenase (276 aa).

It belongs to the MTD family.

The enzyme catalyses 5,10-methylenetetrahydromethanopterin + oxidized coenzyme F420-(gamma-L-Glu)(n) + 2 H(+) = 5,10-methenyl-5,6,7,8-tetrahydromethanopterin + reduced coenzyme F420-(gamma-L-Glu)(n). Functionally, catalyzes the oxidation of methylene-H(4)MPT to methenyl-H(4)MPT(+). This chain is F420-dependent methylenetetrahydromethanopterin dehydrogenase, found in Methanosphaera stadtmanae (strain ATCC 43021 / DSM 3091 / JCM 11832 / MCB-3).